The primary structure comprises 217 residues: GrpE protein homolog 1, mitochondrial (217 aa).

The transit peptide at 1–27 directs the protein to the mitochondrion; sequence MAARCVRLARRSLPALALSFRPSPRLL. K94 is subject to N6-acetyllysine; alternate. The residue at position 94 (K94) is an N6-succinyllysine; alternate. N6-acetyllysine is present on K100. K120 bears the N6-succinyllysine mark. An N6-acetyllysine; alternate modification is found at K215. An N6-succinyllysine; alternate modification is found at K215.

This sequence belongs to the GrpE family. As to quaternary structure, probable component of the PAM complex at least composed of a mitochondrial HSP70 protein, GRPEL1 or GRPEL2, TIMM44, TIMM16/PAM16 and TIMM14/DNAJC19. Binds to HSP70, HSC70 and HSJ1B. Ubiquitous. Particularly abundant in heart, kidney and liver.

The protein localises to the mitochondrion matrix. In terms of biological role, essential component of the PAM complex, a complex required for the translocation of transit peptide-containing proteins from the inner membrane into the mitochondrial matrix in an ATP-dependent manner. Seems to control the nucleotide-dependent binding of mitochondrial HSP70 to substrate proteins. The chain is GrpE protein homolog 1, mitochondrial (Grpel1) from Rattus norvegicus (Rat).